The sequence spans 210 residues: Uracil phosphoribosyltransferase (210 aa).

Residues Arg77, Arg102, and 129–137 (DPMLATGAS) each bind 5-phospho-alpha-D-ribose 1-diphosphate. Residues Ile195 and 200-202 (GDA) contribute to the uracil site. 5-phospho-alpha-D-ribose 1-diphosphate is bound at residue Asp201.

This sequence belongs to the UPRTase family. Requires Mg(2+) as cofactor.

The catalysed reaction is UMP + diphosphate = 5-phospho-alpha-D-ribose 1-diphosphate + uracil. It participates in pyrimidine metabolism; UMP biosynthesis via salvage pathway; UMP from uracil: step 1/1. Allosterically activated by GTP. Catalyzes the conversion of uracil and 5-phospho-alpha-D-ribose 1-diphosphate (PRPP) to UMP and diphosphate. This Mycoplasmoides gallisepticum (strain R(low / passage 15 / clone 2)) (Mycoplasma gallisepticum) protein is Uracil phosphoribosyltransferase.